The chain runs to 371 residues: RNA-binding protein 48 (371 aa).

An RRM domain is found at 46–124 (QYLLIQGVPA…GLLHVCYAPE (79 aa)). Disordered stretches follow at residues 157 to 191 (KPVPEQKGTKDSRQGFHPPMPGFGTAALNTSPESP) and 348 to 371 (VPKPPEDNIKDVCTSHPGKQRRRI). A compositionally biased stretch (basic and acidic residues) spans 158–170 (PVPEQKGTKDSRQ).

It belongs to the RBM48 family. In terms of assembly, component of the minor spliceosome. Within this complex, interacts with ARMC7 and PRPF8/PRP8.

In terms of biological role, as a component of the minor spliceosome, involved in the splicing of U12-type introns in pre-mRNAs. The chain is RNA-binding protein 48 (Rbm48) from Mus musculus (Mouse).